Consider the following 261-residue polypeptide: UPF0246 protein AZOSEA34360 (261 aa).

Belongs to the UPF0246 family.

In Aromatoleum aromaticum (strain DSM 19018 / LMG 30748 / EbN1) (Azoarcus sp. (strain EbN1)), this protein is UPF0246 protein AZOSEA34360.